A 123-amino-acid polypeptide reads, in one-letter code: Small ribosomal subunit protein uS12 (123 aa).

At Asp89 the chain carries 3-methylthioaspartic acid.

The protein belongs to the universal ribosomal protein uS12 family. In terms of assembly, part of the 30S ribosomal subunit. Contacts proteins S8 and S17. May interact with IF1 in the 30S initiation complex.

Functionally, with S4 and S5 plays an important role in translational accuracy. Its function is as follows. Interacts with and stabilizes bases of the 16S rRNA that are involved in tRNA selection in the A site and with the mRNA backbone. Located at the interface of the 30S and 50S subunits, it traverses the body of the 30S subunit contacting proteins on the other side and probably holding the rRNA structure together. The combined cluster of proteins S8, S12 and S17 appears to hold together the shoulder and platform of the 30S subunit. In Bifidobacterium animalis subsp. lactis (strain AD011), this protein is Small ribosomal subunit protein uS12.